The chain runs to 164 residues: Elicitin-like protein 2 (164 aa).

Residues 1 to 22 form the signal peptide; that stretch reads MFSKTLVVLAAVAAVTVNGLTA. Cystine bridges form between Cys-25/Cys-91, Cys-47/Cys-76, and Cys-71/Cys-118. Positions 121–164 are disordered; that stretch reads ISGGGSTPTTAPPSGTTPTTPTTAPPTGTTPGVTPSPTTPKPAC. Low complexity predominate over residues 127–156; that stretch reads TPTTAPPSGTTPTTPTTAPPTGTTPGVTPS.

It belongs to the elicitin family.

The protein resides in the secreted. Its function is as follows. Induces local and distal defense responses (incompatible hypersensitive reaction) in plants from the solanaceae and cruciferae families. Elicits leaf necrosis and causes the accumulation of pathogenesis-related proteins. Might interact with the lipidic molecules of the plasma membrane. The protein is Elicitin-like protein 2 (POD-2) of Pythium oligandrum (Mycoparasitic fungus).